The primary structure comprises 221 residues: Sentrin-specific protease 8 (221 aa).

Methionine 1 carries the N-acetylmethionine modification. The segment at 11-174 (SLLRQSDVSL…MYVICNTEAL (164 aa)) is protease. Residues histidine 102 and aspartate 119 contribute to the active site. The active-site Nucleophile is the cysteine 163.

This sequence belongs to the peptidase C48 family.

Functionally, protease that catalyzes two essential functions in the NEDD8 pathway: processing of full-length NEDD8 to its mature form and deconjugation of NEDD8 from targeted proteins such as cullins or p53. This Mus musculus (Mouse) protein is Sentrin-specific protease 8 (Senp8).